The sequence spans 1082 residues: Protein SPT23 (1082 aa).

Disordered stretches follow at residues 315-346, 376-417, and 457-476; these read NASNTTTPTSTSNAQVSPMTNDTRSFSSPQSD, NNNN…FSDI, and ASARHTGKRQRSVNEPFMST. The segment covering 316–328 has biased composition (low complexity); the sequence is ASNTTTPTSTSNA. Positions 329-346 are enriched in polar residues; the sequence is QVSPMTNDTRSFSSPQSD. Low complexity-rich tracts occupy residues 376–391 and 399–416; these read NNNNDNDNKNNIKTNT and HFPSPNSSSEDSNHSFSD. At Ser-468 the chain carries Phosphoserine. The 78-residue stretch at 508–585 folds into the IPT/TIG domain; sequence PSIQRVIPAQ…DPSETSMRNN (78 aa). 2 ANK repeats span residues 709-738 and 742-771; these read RGRTLLHLAAFNNWYSLVSLLIKYGSHLND and FGFTPLHMACINGDLRIIRLLLECNVNIMK.

Dosage-dependent suppressor of Ty-induced promoter mutations. May exert its suppression effect through protein-protein interactions since does not present any of the motifs generally found in transcriptional activators or DNA binding proteins. This is Protein SPT23 (SPT23) from Saccharomyces cerevisiae (strain ATCC 204508 / S288c) (Baker's yeast).